The chain runs to 548 residues: Chaperonin GroEL (548 aa).

Residues 29-32 (TLGP), Lys50, 86-90 (DGTTT), Gly413, 479-481 (NAA), and Asp496 each bind ATP.

The protein belongs to the chaperonin (HSP60) family. In terms of assembly, forms a cylinder of 14 subunits composed of two heptameric rings stacked back-to-back. Interacts with the co-chaperonin GroES.

It localises to the cytoplasm. It catalyses the reaction ATP + H2O + a folded polypeptide = ADP + phosphate + an unfolded polypeptide.. Together with its co-chaperonin GroES, plays an essential role in assisting protein folding. The GroEL-GroES system forms a nano-cage that allows encapsulation of the non-native substrate proteins and provides a physical environment optimized to promote and accelerate protein folding. The chain is Chaperonin GroEL from Deinococcus radiodurans (strain ATCC 13939 / DSM 20539 / JCM 16871 / CCUG 27074 / LMG 4051 / NBRC 15346 / NCIMB 9279 / VKM B-1422 / R1).